The chain runs to 111 residues: Large ribosomal subunit protein uL22 (111 aa).

Belongs to the universal ribosomal protein uL22 family. Part of the 50S ribosomal subunit.

Functionally, this protein binds specifically to 23S rRNA; its binding is stimulated by other ribosomal proteins, e.g. L4, L17, and L20. It is important during the early stages of 50S assembly. It makes multiple contacts with different domains of the 23S rRNA in the assembled 50S subunit and ribosome. Its function is as follows. The globular domain of the protein is located near the polypeptide exit tunnel on the outside of the subunit, while an extended beta-hairpin is found that lines the wall of the exit tunnel in the center of the 70S ribosome. This chain is Large ribosomal subunit protein uL22, found in Chlamydia trachomatis serovar L2b (strain UCH-1/proctitis).